We begin with the raw amino-acid sequence, 162 residues long: EF-hand calcium-binding domain-containing protein 11 (162 aa).

EF-hand domains lie at 18-53 (SERR…LFGY), 91-126 (LYRN…VAPK), and 127-162 (LPSR…GKAK). Positions 140, 142, 144, 146, and 151 each coordinate Ca(2+).

The polypeptide is EF-hand calcium-binding domain-containing protein 11 (Efcab11) (Rattus norvegicus (Rat)).